The following is a 176-amino-acid chain: Endoribonuclease YbeY (176 aa).

Zn(2+)-binding residues include H117, H121, and H127.

This sequence belongs to the endoribonuclease YbeY family. Requires Zn(2+) as cofactor.

The protein resides in the cytoplasm. Single strand-specific metallo-endoribonuclease involved in late-stage 70S ribosome quality control and in maturation of the 3' terminus of the 16S rRNA. The sequence is that of Endoribonuclease YbeY from Methylocella silvestris (strain DSM 15510 / CIP 108128 / LMG 27833 / NCIMB 13906 / BL2).